The following is a 432-amino-acid chain: 3-phosphoshikimate 1-carboxyvinyltransferase (432 aa).

Residues K23, S24, and R28 each coordinate 3-phosphoshikimate. K23 lines the phosphoenolpyruvate pocket. Phosphoenolpyruvate-binding residues include G95 and R123. S167, Q169, D317, and K344 together coordinate 3-phosphoshikimate. Q169 provides a ligand contact to phosphoenolpyruvate. The Proton acceptor role is filled by D317. Positions 348 and 390 each coordinate phosphoenolpyruvate.

Belongs to the EPSP synthase family. In terms of assembly, monomer.

It localises to the cytoplasm. It carries out the reaction 3-phosphoshikimate + phosphoenolpyruvate = 5-O-(1-carboxyvinyl)-3-phosphoshikimate + phosphate. Its pathway is metabolic intermediate biosynthesis; chorismate biosynthesis; chorismate from D-erythrose 4-phosphate and phosphoenolpyruvate: step 6/7. In terms of biological role, catalyzes the transfer of the enolpyruvyl moiety of phosphoenolpyruvate (PEP) to the 5-hydroxyl of shikimate-3-phosphate (S3P) to produce enolpyruvyl shikimate-3-phosphate and inorganic phosphate. The polypeptide is 3-phosphoshikimate 1-carboxyvinyltransferase (Staphylococcus saprophyticus subsp. saprophyticus (strain ATCC 15305 / DSM 20229 / NCIMB 8711 / NCTC 7292 / S-41)).